A 637-amino-acid chain; its full sequence is MNANPKFLAATAEVDAAAVAPLPKSRKIYETGSRPDIRVPFREIEQQDTPTMFGGERNPPLTVYDTSGPYTDPQAHIDIRRGLPELRRAWIEERGDVELLAGPTSDYGRARLQDPQLTAMRFDLRRPPRRAKDGANVTQMHYARRGIVTPEMEYVAIRESLRREHYIESLRASGPEGEKMARRLLRQHPGQSFGAAIPAAITPEFVRDEIARGRAIIPANINHPEVEPMIIGRNFLVKINANIGNSAVSSGIGEEVEKMTWAIRWGGDTVMDLSTGKHIHETREWIIRNSPVPIGTVPIYQALEKVDGKAEALTWEIFRDTLIEQAEQGVDYFTIHAGVRLPFIPMTADRMTGIVSRGGSIMAKWCLAHHKESFLYERFEEICEIMKAYDVSFSLGDGLRPGSGYDANDEAQFAELKTLGELTQVAWKHDVQVMIEGPGHVPMQMIKENMELQLEHCHEAPFYTLGPLTTDIAPGYDHITSGIGAALIGWYGTAMLCYVTPKEHLGLPNKKDVKDGIITYKIAAHAADLAKGHPGAAVRDNALSKARFEFRWDDQFNLGLDPDTAKEFHDETLPKDSMKVAHFCSMCGPHFCSMKITQDVREYAASQGVSAQQALTQGMQEKAIEFVKKGAEVYHRS.

Substrate is bound by residues asparagine 242, methionine 271, tyrosine 300, histidine 336, 356-358 (SRG), 397-400 (DGLR), and glutamate 436. Position 440 (histidine 440) interacts with Zn(2+). Tyrosine 463 contacts substrate. Histidine 504 contacts Zn(2+). [4Fe-4S] cluster-binding residues include cysteine 584, cysteine 587, and cysteine 592.

This sequence belongs to the ThiC family. In terms of assembly, homodimer. [4Fe-4S] cluster serves as cofactor.

It catalyses the reaction 5-amino-1-(5-phospho-beta-D-ribosyl)imidazole + S-adenosyl-L-methionine = 4-amino-2-methyl-5-(phosphooxymethyl)pyrimidine + CO + 5'-deoxyadenosine + formate + L-methionine + 3 H(+). It functions in the pathway cofactor biosynthesis; thiamine diphosphate biosynthesis. Functionally, catalyzes the synthesis of the hydroxymethylpyrimidine phosphate (HMP-P) moiety of thiamine from aminoimidazole ribotide (AIR) in a radical S-adenosyl-L-methionine (SAM)-dependent reaction. This is Phosphomethylpyrimidine synthase from Bordetella avium (strain 197N).